The following is a 466-amino-acid chain: MSIAQLFNQSWVEKSKYVPVRLSDEERKILSLLEAALEVIDYTGHVDIISYTTRTKLMVKYLNEMCSIVMGLVTAMDIKAGRDLLIGRDHKSNARFFQTVFEIGRRYKIMNPEKMRATYGAVMYMCQDSLIPDVRSQLGFDFVSPIKTVYNVLEKHKLLGLLEEKQLLNNLLKQSDPQSNANAKAELLKEREEASETLLKKYNPGKDEKLQKVLTDCFASLADHEAFLLANRNPVEKMRAYLHKFFNPHDTKNGSLKIGYMTGAKLNHDHKTQFFYVDQSLVFWSCMMDQMFLLWLESDASLLDKHSRYFISDTGQGLNRVQLCPLVRSTVTRILSSVQKQQEIPWMGSSVIHLGDRDVPNALMFIDKYRQVPHILAPLVKVLQQLEFLRDPYLVQYIENEYGSVNGLQKTILLDFFRHGFNGQGSDGGSCIDGRLTSAWNWTNEITKKKYYRILLMSGFLNFEGI.

It belongs to the UPF0652 family.

It is found in the cytoplasm. The protein localises to the nucleus. In Schizosaccharomyces pombe (strain 972 / ATCC 24843) (Fission yeast), this protein is UPF0652 protein C16A11.03c.